Consider the following 146-residue polypeptide: Large-conductance mechanosensitive channel (146 aa).

3 helical membrane passes run 17–37 (IDLAVGVIIGGAFGKIVDSLV), 40–60 (IIMPLITVITGGGVDFTQKFV), and 89–109 (LTILINFIILAWVVFLMVKLI).

Belongs to the MscL family. Homopentamer.

Its subcellular location is the cell inner membrane. Channel that opens in response to stretch forces in the membrane lipid bilayer. May participate in the regulation of osmotic pressure changes within the cell. The polypeptide is Large-conductance mechanosensitive channel (Acinetobacter baylyi (strain ATCC 33305 / BD413 / ADP1)).